The chain runs to 340 residues: CMP-N-acetylneuraminate-beta-galactosamide-alpha-2,3-sialyltransferase 1 (340 aa).

Residues 1-13 (MVTLRKRTLKVLT) lie on the Cytoplasmic side of the membrane. A helical; Signal-anchor for type II membrane protein transmembrane segment spans residues 14–34 (FLVLFIFLTSFFLNYSHTMVA). The Lumenal portion of the chain corresponds to 35–340 (TTWFPKQMVL…INKIRIFKGR (306 aa)). 3 cysteine pairs are disulfide-bonded: cysteine 59/cysteine 64, cysteine 61/cysteine 139, and cysteine 142/cysteine 281. Residue asparagine 79 is glycosylated (N-linked (GlcNAc...) asparagine). Glutamine 105 lines the substrate pocket. Asparagine 114 carries N-linked (GlcNAc...) asparagine glycosylation. The substrate site is built by asparagine 147 and asparagine 170. Asparagine 201 is a glycosylation site (N-linked (GlcNAc...) asparagine). Substrate is bound by residues tyrosine 230, tyrosine 266, glycine 270, glycine 290, histidine 299, and histidine 316. N-linked (GlcNAc...) asparagine glycosylation is present at asparagine 323.

This sequence belongs to the glycosyltransferase 29 family. Post-translationally, the soluble form derives from the membrane form by proteolytic processing.

Its subcellular location is the golgi apparatus. The protein localises to the golgi stack membrane. It is found in the trans-Golgi network membrane. It localises to the secreted. It carries out the reaction a beta-D-galactosyl-(1-&gt;3)-N-acetyl-alpha-D-galactosaminyl derivative + CMP-N-acetyl-beta-neuraminate = an N-acetyl-alpha-neuraminyl-(2-&gt;3)-beta-D-galactosyl-(1-&gt;3)-N-acetyl-alpha-D-galactosaminyl derivative + CMP + H(+). The catalysed reaction is a ganglioside GM1 + CMP-N-acetyl-beta-neuraminate = a ganglioside GD1a + CMP + H(+). The enzyme catalyses a ganglioside GM1 (d18:1(4E)) + CMP-N-acetyl-beta-neuraminate = a ganglioside GD1a (d18:1(4E)) + CMP + H(+). It catalyses the reaction ganglioside GM1 (d18:1(4E)/18:0) + CMP-N-acetyl-beta-neuraminate = ganglioside GD1a (18:1(4E)/18:0) + CMP + H(+). It carries out the reaction a ganglioside GA1 + CMP-N-acetyl-beta-neuraminate = a ganglioside GM1b + CMP + H(+). The catalysed reaction is a ganglioside GA1 (d18:1(4E)) + CMP-N-acetyl-beta-neuraminate = a ganglioside GM1b (d18:1(4E)) + CMP + H(+). The enzyme catalyses a ganglioside GD1b + CMP-N-acetyl-beta-neuraminate = a ganglioside GT1b + CMP + H(+). It catalyses the reaction a 3-O-[beta-D-galactosyl-(1-&gt;3)-N-acetyl-alpha-D-galactosaminyl]-L-threonyl-[protein] + CMP-N-acetyl-beta-neuraminate = a 3-O-[N-acetyl-alpha-neuraminyl-(2-&gt;3)-beta-D-galactosyl-(1-&gt;3)-N-acetyl-alpha-D-galactosaminyl]-L-threonyl-[protein] + CMP + H(+). It carries out the reaction a 3-O-[beta-D-galactosyl-(1-&gt;3)-N-acetyl-alpha-D-galactosaminyl]-L-seryl-[protein] + CMP-N-acetyl-beta-neuraminate = 3-O-[N-acetyl-alpha-neuraminyl-(2-&gt;3)-beta-D-galactosyl-(1-&gt;3)-N-acetyl-alpha-D-galactosaminyl]-L-seryl-[protein] + CMP + H(+). It participates in protein modification; protein glycosylation. The protein operates within glycolipid biosynthesis. A beta-galactoside alpha2-&gt;3 sialyltransferase involved in terminal sialylation of glycoproteins and glycolipids. Catalyzes the transfer of sialic acid (N-acetyl-neuraminic acid; Neu5Ac) from the nucleotide sugar donor CMP-Neu5Ac onto acceptor Galbeta-(1-&gt;3)-GalNAc-terminated glycoconjugates through an alpha2-3 linkage. Adds sialic acid to the core 1 O-glycan, Galbeta-(1-&gt;3)-GalNAc-O-Ser/Thr, which is a major structure of mucin-type O-glycans. As part of a homeostatic mechanism that regulates CD8-positive T cell numbers, sialylates core 1 O-glycans of T cell glycoproteins, SPN/CD43 and PTPRC/CD45. Prevents premature apoptosis of thymic CD8-positive T cells prior to peripheral emigration, whereas in the secondary lymphoid organs controls the survival of CD8-positive memory T cells generated following a successful immune response. Transfers sialic acid to asialofetuin, presumably onto Galbeta-(1-&gt;3)-GalNAc-O-Ser. Sialylates GM1a, GA1 and GD1b gangliosides to form GD1a, GM1b and GT1b, respectively. The chain is CMP-N-acetylneuraminate-beta-galactosamide-alpha-2,3-sialyltransferase 1 (ST3GAL1) from Pan troglodytes (Chimpanzee).